We begin with the raw amino-acid sequence, 235 residues long: Auracyanin-B (235 aa).

The segment covering 1–21 (MSWRGSGRSNFRSRSSSNGGS) has biased composition (low complexity). Disordered stretches follow at residues 1-27 (MSWRGSGRSNFRSRSSSNGGSTFSGGS) and 64-107 (ATPR…NVVN). Residues 1-56 (MSWRGSGRSNFRSRSSSNGGSTFSGGSAGGPPLIVMMGLAFGAGLIMLIVMIASNA) form the signal peptide. Positions 57–80 (TAGGFVAATPRPTATPRPTAAPAP) are excised as a propeptide. A compositionally biased stretch (pro residues) spans 69 to 86 (TATPRPTAAPAPTQPPAA). Residues 87 to 100 (QPTTAPATQAANAP) are compositionally biased toward low complexity. Positions 111 to 235 (AQTVEVRAAP…GMKGTLTVTP (125 aa)) constitute a Plastocyanin-like domain. Cu cation contacts are provided by His152, Cys217, His222, and Met227.

The protein belongs to the multicopper oxidase family. Cu cation is required as a cofactor. Glycosylated.

Its subcellular location is the cell membrane. Probably a soluble electron acceptor for the integral membrane protein electron transfer alternative complex III (ACIII). The sequence is that of Auracyanin-B from Chloroflexus aurantiacus (strain ATCC 29366 / DSM 635 / J-10-fl).